The following is a 325-amino-acid chain: LIM and senescent cell antigen-like-containing domain protein 1 (325 aa).

Alanine 2 bears the N-acetylalanine mark. 5 LIM zinc-binding domains span residues 10-62 (CERC…CEHD), 71-121 (CHQC…CRPC), 135-184 (CQKC…CLPC), 193-243 (CGAC…CETH), and 252-303 (CFHC…CKKC).

Component of the heterotrimeric IPP (ILK-PINCH-PARVIN) complex composed of ILK, LIMS1/PINCH and PARVA; the complex binds to F-actin via the C-terminal tail of LIMS1 and the N-terminal region of PARVA, promoting F-actin filament bundling. Formation of the IPP complex is dependent on protein kinase C and precedes integrin-mediated cell adhesion and spreading. Competes with LIMS2 for interaction with ILK. Interacts (via LIM zinc-binding 5) with TGFB1I1. Interacts with SH3/SH2 adapter NCK2, thereby linking the complex to cell surface receptors. Expressed in most tissues except in the brain.

It localises to the cell junction. The protein resides in the focal adhesion. Its subcellular location is the cell membrane. Within the IPP (ILK-PINCH-PARVIN) complex, binds to F-actin, promoting F-actin bundling, a process required to generate force for actin cytoskeleton reorganization and subsequent dynamic cell adhesion events such as cell spreading and migration. In Homo sapiens (Human), this protein is LIM and senescent cell antigen-like-containing domain protein 1 (LIMS1).